A 131-amino-acid polypeptide reads, in one-letter code: Small ribosomal subunit protein uS11 (131 aa).

Belongs to the universal ribosomal protein uS11 family. As to quaternary structure, part of the 30S ribosomal subunit. Interacts with proteins S7 and S18. Binds to IF-3.

Functionally, located on the platform of the 30S subunit, it bridges several disparate RNA helices of the 16S rRNA. Forms part of the Shine-Dalgarno cleft in the 70S ribosome. This Granulibacter bethesdensis (strain ATCC BAA-1260 / CGDNIH1) protein is Small ribosomal subunit protein uS11.